Reading from the N-terminus, the 954-residue chain is Xylanolytic transcriptional activator xlnR (954 aa).

Disordered regions lie at residues 1 to 39 (MSTT…LAEG) and 51 to 93 (REAA…SQRD). The segment covering 8 to 21 (HFPHSYSPFSSSRS) has biased composition (low complexity). Residues 22-33 (LNRMAQSQTSGL) show a composition bias toward polar residues. A compositionally biased stretch (basic and acidic residues) spans 64–78 (GKPKDQFQVDNDNHH). Residues 82 to 91 (SLSNFKNPSQ) are compositionally biased toward polar residues. The segment at residues 119-145 (CDQCNQLRTKCDGQNPCAHCIEFGLTC) is a DNA-binding region (zn(2)-C6 fungal-type). 4 disordered regions span residues 173–226 (ATNS…HSEA), 312–332 (NPQE…STEN), 566–607 (ELPP…PGNT), and 758–777 (MDGS…STVE). Positions 174–183 (TNSGQPNGSS) are enriched in polar residues. Residues 574–590 (ARPDAERDGDPDADLSK) show a composition bias toward basic and acidic residues. The segment covering 764 to 777 (NHVSPSGRSSSTVE) has biased composition (polar residues).

This sequence belongs to the xlnR/xlr1 family.

It localises to the nucleus. Functionally, transcriptional activator of the xylanolytic system. Involved in the regulation of extracellular cellulolytic and xylanolytic genes and in the regulation of the intracellular activities of D-xylose catabolic genes in the pentose catabolic pathway (PCP) in response to the presence of D-xylose. This Aspergillus fumigatus (strain CBS 144.89 / FGSC A1163 / CEA10) (Neosartorya fumigata) protein is Xylanolytic transcriptional activator xlnR (xlnR).